Reading from the N-terminus, the 143-residue chain is MAIERTFSIIKPNAVAKNVIGSIFARFEAAGFKIVGTKMLHLTVEQARGFYAEHDGKPFFDGLVEFMTSGPIVVSVLESENAVQRHRDLLGATNPANALAGTLRADYADSLTENGTHGSDSLESAQREIAFFFGEGEVCPRTR.

ATP contacts are provided by K11, F59, R87, T93, R104, and N114. H117 serves as the catalytic Pros-phosphohistidine intermediate.

Belongs to the NDK family. As to quaternary structure, homotetramer. Mg(2+) serves as cofactor.

It localises to the cytoplasm. The catalysed reaction is a 2'-deoxyribonucleoside 5'-diphosphate + ATP = a 2'-deoxyribonucleoside 5'-triphosphate + ADP. It carries out the reaction a ribonucleoside 5'-diphosphate + ATP = a ribonucleoside 5'-triphosphate + ADP. Its function is as follows. Major role in the synthesis of nucleoside triphosphates other than ATP. The ATP gamma phosphate is transferred to the NDP beta phosphate via a ping-pong mechanism, using a phosphorylated active-site intermediate. The sequence is that of Nucleoside diphosphate kinase from Salmonella agona (strain SL483).